A 157-amino-acid chain; its full sequence is Endoribonuclease YbeY (157 aa).

Zn(2+) is bound by residues H114, H118, and H124.

This sequence belongs to the endoribonuclease YbeY family. It depends on Zn(2+) as a cofactor.

The protein localises to the cytoplasm. In terms of biological role, single strand-specific metallo-endoribonuclease involved in late-stage 70S ribosome quality control and in maturation of the 3' terminus of the 16S rRNA. This is Endoribonuclease YbeY from Salmonella agona (strain SL483).